Here is a 101-residue protein sequence, read N- to C-terminus: Ubiquitin-related modifier 1 (101 aa).

Gly101 carries the 1-thioglycine modification. Gly101 is covalently cross-linked (Glycyl lysine isopeptide (Gly-Lys) (interchain with K-? in acceptor proteins)).

It belongs to the URM1 family. In terms of processing, C-terminal thiocarboxylation occurs in 2 steps, it is first acyl-adenylated (-COAMP) via the hesA/moeB/thiF part of UBA4, then thiocarboxylated (-COSH) via the rhodanese domain of UBA4.

The protein localises to the cytoplasm. It participates in tRNA modification; 5-methoxycarbonylmethyl-2-thiouridine-tRNA biosynthesis. Acts as a sulfur carrier required for 2-thiolation of mcm(5)S(2)U at tRNA wobble positions of cytosolic tRNA(Lys), tRNA(Glu) and tRNA(Gln). Serves as sulfur donor in tRNA 2-thiolation reaction by being thiocarboxylated (-COSH) at its C-terminus by the MOCS3 homolog UBA4. The sulfur is then transferred to tRNA to form 2-thiolation of mcm(5)S(2)U. Prior mcm(5) tRNA modification by the elongator complex is required for 2-thiolation. Also acts as a ubiquitin-like protein (UBL) that is covalently conjugated via an isopeptide bond to lysine residues of target proteins such as AHP1. The thiocarboxylated form serves as substrate for conjugation and oxidative stress specifically induces the formation of UBL-protein conjugates. The sequence is that of Ubiquitin-related modifier 1 from Kluyveromyces lactis (strain ATCC 8585 / CBS 2359 / DSM 70799 / NBRC 1267 / NRRL Y-1140 / WM37) (Yeast).